We begin with the raw amino-acid sequence, 346 residues long: D-fructose 1,6-bisphosphatase class 2/sedoheptulose 1,7-bisphosphatase 1 (346 aa).

Residues Asp33, Glu57, Asp97, and Glu100 each coordinate Mn(2+). Substrate-binding positions include 100–102 (EGT), Tyr131, 176–178 (RAR), and 198–200 (DGD). Glu225 contributes to the Mn(2+) binding site.

This sequence belongs to the FBPase class 2 family. Homotetramer. Requires Mn(2+) as cofactor.

The catalysed reaction is beta-D-fructose 1,6-bisphosphate + H2O = beta-D-fructose 6-phosphate + phosphate. The enzyme catalyses D-sedoheptulose 1,7-bisphosphate + H2O = D-sedoheptulose 7-phosphate + phosphate. The protein operates within carbohydrate biosynthesis; Calvin cycle. Catalyzes the hydrolysis of fructose 1,6-bisphosphate (Fru 1,6-P2) and sedoheptulose 1,7-bisphosphate (Sed 1,7-P2) to fructose 6-phosphate and sedoheptulose 7-phosphate, respectively. The sequence is that of D-fructose 1,6-bisphosphatase class 2/sedoheptulose 1,7-bisphosphatase 1 from Acaryochloris marina (strain MBIC 11017).